A 142-amino-acid chain; its full sequence is UPF0305 protein MK0666 (142 aa).

Belongs to the UPF0305 family.

The protein is UPF0305 protein MK0666 of Methanopyrus kandleri (strain AV19 / DSM 6324 / JCM 9639 / NBRC 100938).